A 363-amino-acid polypeptide reads, in one-letter code: 1-aminocyclopropane-1-carboxylate oxidase homolog (363 aa).

Residues 212–312 (FHLFCSCNYY…MSITCFFGES (101 aa)) form the Fe2OG dioxygenase domain. Positions 236, 238, and 292 each coordinate Fe cation.

Belongs to the iron/ascorbate-dependent oxidoreductase family.

The polypeptide is 1-aminocyclopropane-1-carboxylate oxidase homolog (ACO3) (Solanum lycopersicum (Tomato)).